A 396-amino-acid polypeptide reads, in one-letter code: Elongation factor Tu (396 aa).

The region spanning 10-206 (KPHVNIGTIG…AVDEYIPDPV (197 aa)) is the tr-type G domain. The G1 stretch occupies residues 19–26 (GHVDHGKT). A GTP-binding site is contributed by 19–26 (GHVDHGKT). Residue Thr-26 participates in Mg(2+) binding. Residues 62 to 66 (GITIN) are G2. A G3 region spans residues 83–86 (DAPG). GTP is bound by residues 83-87 (DAPGH) and 138-141 (NKSD). The G4 stretch occupies residues 138 to 141 (NKSD). A G5 region spans residues 176–178 (SGL).

It belongs to the TRAFAC class translation factor GTPase superfamily. Classic translation factor GTPase family. EF-Tu/EF-1A subfamily. Monomer.

It localises to the cytoplasm. The catalysed reaction is GTP + H2O = GDP + phosphate + H(+). Functionally, GTP hydrolase that promotes the GTP-dependent binding of aminoacyl-tRNA to the A-site of ribosomes during protein biosynthesis. In Micrococcus luteus (strain ATCC 4698 / DSM 20030 / JCM 1464 / CCM 169 / CCUG 5858 / IAM 1056 / NBRC 3333 / NCIMB 9278 / NCTC 2665 / VKM Ac-2230) (Micrococcus lysodeikticus), this protein is Elongation factor Tu.